The following is a 122-amino-acid chain: UPF0102 protein CA_C1763 (122 aa).

The protein belongs to the UPF0102 family.

This is UPF0102 protein CA_C1763 from Clostridium acetobutylicum (strain ATCC 824 / DSM 792 / JCM 1419 / IAM 19013 / LMG 5710 / NBRC 13948 / NRRL B-527 / VKM B-1787 / 2291 / W).